We begin with the raw amino-acid sequence, 328 residues long: CMP-N-acetylneuraminate-beta-galactosamide-alpha-2,3-sialyltransferase 4 (328 aa).

The Cytoplasmic segment spans residues 1–7; it reads MCPAGWK. The helical; Signal-anchor for type II membrane protein transmembrane segment at 8–25 threads the bilayer; that stretch reads LLAMLALVLVVMVWYSIS. The Lumenal segment spans residues 26–328; that stretch reads REDSFYFPIP…MGAVKNLTSF (303 aa). Asn56, Asn126, Asn305, and Asn324 each carry an N-linked (GlcNAc...) asparagine glycan. An intrachain disulfide couples Cys115 to Cys268.

It belongs to the glycosyltransferase 29 family. The soluble form derives from the membrane form by proteolytic processing.

It is found in the golgi apparatus. The protein resides in the golgi stack membrane. It localises to the secreted. The catalysed reaction is a beta-D-galactosyl-(1-&gt;3)-N-acetyl-beta-D-galactosaminyl derivative + CMP-N-acetyl-beta-neuraminate = an N-acetyl-alpha-neuraminyl-(2-&gt;3)-beta-D-galactosyl-(1-&gt;3)-N-acetyl-beta-D-galactosaminyl derivative + CMP + H(+). It carries out the reaction a beta-D-galactosyl-(1-&gt;3)-N-acetyl-alpha-D-galactosaminyl derivative + CMP-N-acetyl-beta-neuraminate = an N-acetyl-alpha-neuraminyl-(2-&gt;3)-beta-D-galactosyl-(1-&gt;3)-N-acetyl-alpha-D-galactosaminyl derivative + CMP + H(+). The enzyme catalyses a beta-D-galactosyl-(1-&gt;4)-N-acetyl-beta-D-glucosaminyl derivative + CMP-N-acetyl-beta-neuraminate = an N-acetyl-alpha-neuraminyl-(2-&gt;3)-beta-D-galactosyl-(1-&gt;4)-N-acetyl-beta-D-glucosaminyl derivative + CMP + H(+). It catalyses the reaction a ganglioside GM1 (d18:1(4E)) + CMP-N-acetyl-beta-neuraminate = a ganglioside GD1a (d18:1(4E)) + CMP + H(+). The catalysed reaction is a ganglioside GA1 (d18:1(4E)) + CMP-N-acetyl-beta-neuraminate = a ganglioside GM1b (d18:1(4E)) + CMP + H(+). It carries out the reaction a ganglioside GT1c (d18:1(4E)) + CMP-N-acetyl-beta-neuraminate = a ganglioside GQ1c (d18:1(4E)) + CMP + H(+). The enzyme catalyses a neolactoside nLc4Cer + CMP-N-acetyl-beta-neuraminate = a neolactoside IV(3)-alpha-NeuAc-nLc4Cer + CMP + H(+). It catalyses the reaction a neolactoside nLc4Cer(d18:1(4E)) + CMP-N-acetyl-beta-neuraminate = a neolactoside IV(3)-alpha-NeuAc-nLc4Cer(d18:1(4E)) + CMP + H(+). It participates in protein modification; protein glycosylation. Its pathway is glycolipid biosynthesis. A beta-galactoside alpha2-3 sialyltransferase involved in terminal sialylation of glycoproteins and glycolipids. Catalyzes the transfer of sialic acid (N-acetyl-neuraminic acid; Neu5Ac) from the nucleotide sugar donor CMP-Neu5Ac onto acceptor Galbeta-(1-&gt;3)-GalNAc- and Galbeta-(1-&gt;4)-GlcNAc-terminated glycoconjugates through an alpha2-3 linkage. Plays a major role in hemostasis. Responsible for sialylation of plasma VWF/von Willebrand factor, preventing its recognition by asialoglycoprotein receptors (ASGPR) and subsequent clearance. Regulates ASGPR-mediated clearance of platelets. Participates in the biosynthesis of the sialyl Lewis X epitopes, both on O- and N-glycans, which are recognized by SELE/E-selectin, SELP/P-selectin and SELL/L-selectin. Essential for selectin-mediated rolling and adhesion of leukocytes during extravasation. Contributes to adhesion and transendothelial migration of neutrophils likely through terminal sialylation of CXCR2. In glycosphingolipid biosynthesis, sialylates GM1 and GA1 gangliosides to form GD1a and GM1b, respectively. Metabolizes brain c-series ganglioside GT1c forming GQ1c. Synthesizes ganglioside LM1 (IV3Neu5Ac-nLc4Cer), a major structural component of peripheral nerve myelin. The chain is CMP-N-acetylneuraminate-beta-galactosamide-alpha-2,3-sialyltransferase 4 (ST3GAL4) from Pan troglodytes (Chimpanzee).